A 259-amino-acid chain; its full sequence is 3-dehydroquinate dehydratase (259 aa).

Residues 50 to 52 and Arg86 each bind 3-dehydroquinate; that span reads EWR. The active-site Proton donor/acceptor is His147. Lys174 acts as the Schiff-base intermediate with substrate in catalysis. Positions 216, 235, and 239 each coordinate 3-dehydroquinate.

Belongs to the type-I 3-dehydroquinase family. In terms of assembly, homodimer.

The catalysed reaction is 3-dehydroquinate = 3-dehydroshikimate + H2O. It participates in metabolic intermediate biosynthesis; chorismate biosynthesis; chorismate from D-erythrose 4-phosphate and phosphoenolpyruvate: step 3/7. Its function is as follows. Involved in the third step of the chorismate pathway, which leads to the biosynthesis of aromatic amino acids. Catalyzes the cis-dehydration of 3-dehydroquinate (DHQ) and introduces the first double bond of the aromatic ring to yield 3-dehydroshikimate. The sequence is that of 3-dehydroquinate dehydratase from Geobacillus sp. (strain WCH70).